Reading from the N-terminus, the 398-residue chain is GTP cyclohydrolase-2 (398 aa).

The unknown stretch occupies residues Met1–Glu172. Residues Tyr173–Ala398 are GTP cyclohydrolase II. Residue Arg220–Ser224 coordinates GTP. Cys225, Cys236, and Cys238 together coordinate Zn(2+). GTP-binding positions include Gln241, Glu263 to Arg265, and Thr285. Catalysis depends on Asp297, which acts as the Proton acceptor. Residue Arg299 is the Nucleophile of the active site. Residues Ser320 and Lys325 each contribute to the GTP site. A disordered region spans residues Gln375–Ala398.

It in the C-terminal section; belongs to the GTP cyclohydrolase II family. Zn(2+) serves as cofactor.

It catalyses the reaction GTP + 4 H2O = 2,5-diamino-6-hydroxy-4-(5-phosphoribosylamino)-pyrimidine + formate + 2 phosphate + 3 H(+). It functions in the pathway cofactor biosynthesis; riboflavin biosynthesis; 5-amino-6-(D-ribitylamino)uracil from GTP: step 1/4. Catalyzes the conversion of GTP to 2,5-diamino-6-ribosylamino-4(3H)-pyrimidinone 5'-phosphate (DARP), formate and pyrophosphate. The sequence is that of GTP cyclohydrolase-2 (ribA) from Xylella fastidiosa (strain 9a5c).